The following is a 175-amino-acid chain: Gamma-crystallin M1 (175 aa).

Beta/gamma crystallin 'Greek key' domains follow at residues 2–40, 41–86, 89–121, and 130–172; these read GKIIFYEDRNFQGRSYECMSDCSDITTYMSRCQSCRVES, GCFM…RYPY, FRMRIYEREYFGGQMSELMGDCDSIMDRFRMSD, and GHWL…RRIT.

The protein belongs to the beta/gamma-crystallin family. In terms of assembly, monomer.

Crystallins are the dominant structural components of the vertebrate eye lens. The polypeptide is Gamma-crystallin M1 (GM1) (Chiloscyllium indicum (Slender bamboo shark)).